A 180-amino-acid polypeptide reads, in one-letter code: Beta-lactoglobulin (180 aa).

The signal sequence occupies residues 1-18 (MKCLLLALGLALACAAQA). Cystine bridges form between Cys84–Cys178, Cys124–Cys137, and Cys124–Cys139.

This sequence belongs to the calycin superfamily. Lipocalin family. Under physiological conditions beta-lactoglobulin exists as an equilibrium mixture of monomeric and dimeric forms. Interaction with LMBR1L is controversial. In terms of processing, alternate disulfide bonds occur in equal amounts. Synthesized in mammary gland and secreted in milk.

Its subcellular location is the secreted. Its function is as follows. Primary component of whey, it binds retinol and is probably involved in the transport of that molecule. The polypeptide is Beta-lactoglobulin (LGB) (Bubalus bubalis (Domestic water buffalo)).